Reading from the N-terminus, the 210-residue chain is Probable GTP-binding protein EngB (210 aa).

Residues 25-199 (TGIEVAFAGR…RQKLDSWFNE (175 aa)) form the EngB-type G domain. Residues 33–40 (GRSNAGKS), 60–64 (GRTQL), 78–81 (DLPG), 145–148 (TKAD), and 178–180 (FSS) each bind GTP. 2 residues coordinate Mg(2+): Ser-40 and Thr-62.

Belongs to the TRAFAC class TrmE-Era-EngA-EngB-Septin-like GTPase superfamily. EngB GTPase family. Mg(2+) is required as a cofactor.

Its function is as follows. Necessary for normal cell division and for the maintenance of normal septation. The chain is Probable GTP-binding protein EngB from Klebsiella pneumoniae (strain 342).